A 483-amino-acid polypeptide reads, in one-letter code: Regulatory protein ViaA (483 aa).

Belongs to the ViaA family. In terms of assembly, homodimer. Interacts with RavA.

The protein resides in the cytoplasm. Functionally, component of the RavA-ViaA chaperone complex, which may act on the membrane to optimize the function of some of the respiratory chains. ViaA stimulates the ATPase activity of RavA. This Shigella dysenteriae serotype 1 (strain Sd197) protein is Regulatory protein ViaA.